Here is a 574-residue protein sequence, read N- to C-terminus: 2-succinyl-5-enolpyruvyl-6-hydroxy-3-cyclohexene-1-carboxylate synthase (574 aa).

It belongs to the TPP enzyme family. MenD subfamily. Homodimer. Mg(2+) serves as cofactor. It depends on Mn(2+) as a cofactor. Requires thiamine diphosphate as cofactor.

The catalysed reaction is isochorismate + 2-oxoglutarate + H(+) = 5-enolpyruvoyl-6-hydroxy-2-succinyl-cyclohex-3-ene-1-carboxylate + CO2. The protein operates within quinol/quinone metabolism; 1,4-dihydroxy-2-naphthoate biosynthesis; 1,4-dihydroxy-2-naphthoate from chorismate: step 2/7. It functions in the pathway cofactor biosynthesis; phylloquinone biosynthesis. Functionally, catalyzes the thiamine diphosphate-dependent decarboxylation of 2-oxoglutarate and the subsequent addition of the resulting succinic semialdehyde-thiamine pyrophosphate anion to isochorismate to yield 2-succinyl-5-enolpyruvyl-6-hydroxy-3-cyclohexene-1-carboxylate (SEPHCHC). This chain is 2-succinyl-5-enolpyruvyl-6-hydroxy-3-cyclohexene-1-carboxylate synthase, found in Prochlorococcus marinus (strain SARG / CCMP1375 / SS120).